The following is a 99-amino-acid chain: UPF0235 protein PM1313 (99 aa).

Belongs to the UPF0235 family.

The protein is UPF0235 protein PM1313 of Pasteurella multocida (strain Pm70).